The primary structure comprises 360 residues: Arginase, non-hepatic 1 (360 aa).

Residues His122, Asp145, His147, and Asp149 each coordinate Mn(2+). Residues 147-151 (HADIN), 158-160 (SGN), and Asp204 contribute to the substrate site. The Mn(2+) site is built by Asp253 and Asp255. The substrate site is built by Thr267 and Glu298.

It belongs to the arginase family. Homotrimer. Requires Mn(2+) as cofactor. As to expression, expressed at differing tadpole stages in tail, intestine, hindlimb and trunk region. Most abundant in tadpole tail.

It catalyses the reaction L-arginine + H2O = urea + L-ornithine. The protein operates within nitrogen metabolism; urea cycle; L-ornithine and urea from L-arginine: step 1/1. As well as its role in the urea cycle, may be involved in tissue remodeling. The protein is Arginase, non-hepatic 1 (arg2-a) of Xenopus laevis (African clawed frog).